Consider the following 469-residue polypeptide: Secreted triacylglycerol lipase LIP3 (469 aa).

The signal sequence occupies residues 1-21 (MVSLLWKFTLLCLFLLACTSA). Residues C121 and C292 are joined by a disulfide bond. Catalysis depends on S205, which acts as the Nucleophile. Residue N238 is glycosylated (N-linked (GlcNAc...) asparagine). Catalysis depends on residues D352 and H386.

The protein belongs to the AB hydrolase superfamily. Lipase family. Class Lip subfamily.

The protein resides in the secreted. It catalyses the reaction a triacylglycerol + H2O = a diacylglycerol + a fatty acid + H(+). The catalysed reaction is a monoacylglycerol + H2O = glycerol + a fatty acid + H(+). The enzyme catalyses a diacylglycerol + H2O = a monoacylglycerol + a fatty acid + H(+). Functionally, secreted lipase that hydrolyzes acylglycerol lipids such as triacylglycerols and consequently releases free fatty acid. Generates free oleic acid from the substrates mono- and diolein and hydrolyzes triolein in significant amounts. Due to an absence of fatty acid synthase genes in Malassezia species, secretory lipases are essential for the yeast to generate free fatty acids from degradation of sebum and assimilate them as lipid sources for growth. Plays an essential role at the pathogen-host interface during disease progression. Performs also the reverse reaction to build diacyl- and triacyl- glycerols from monoacylglycerols. This chain is Secreted triacylglycerol lipase LIP3, found in Malassezia restricta (strain ATCC 96810 / NBRC 103918 / CBS 7877) (Seborrheic dermatitis infection agent).